A 317-amino-acid polypeptide reads, in one-letter code: Ret finger protein-like 3 (317 aa).

The segment at 40-82 (CPVCSDYLEKPMSLECGCTVCLKCINSLQKEPHGEDLLCCCCS) adopts an RING-type zinc-finger fold. In terms of domain architecture, B30.2/SPRY spans 107 to 301 (EPKLKKILQM…DQGVLSICPL (195 aa)).

As to expression, expressed during neurogenesis in differentiating human embryonic stem cells and in the developing human neocortex.

It localises to the cytoplasm. The protein localises to the nucleus. In terms of biological role, (Microbial infection) Stimulates the activity of Human Immunodeficiency Virus 1/HIV-1 pre-integration complex. This Homo sapiens (Human) protein is Ret finger protein-like 3 (RFPL3).